The sequence spans 282 residues: Phosphatidylserine decarboxylase proenzyme (282 aa).

Residues aspartate 88, histidine 144, and serine 247 each act as charge relay system; for autoendoproteolytic cleavage activity in the active site. Serine 247 serves as the catalytic Schiff-base intermediate with substrate; via pyruvic acid; for decarboxylase activity. Serine 247 is modified (pyruvic acid (Ser); by autocatalysis).

The protein belongs to the phosphatidylserine decarboxylase family. PSD-B subfamily. Prokaryotic type I sub-subfamily. Heterodimer of a large membrane-associated beta subunit and a small pyruvoyl-containing alpha subunit. It depends on pyruvate as a cofactor. Is synthesized initially as an inactive proenzyme. Formation of the active enzyme involves a self-maturation process in which the active site pyruvoyl group is generated from an internal serine residue via an autocatalytic post-translational modification. Two non-identical subunits are generated from the proenzyme in this reaction, and the pyruvate is formed at the N-terminus of the alpha chain, which is derived from the carboxyl end of the proenzyme. The autoendoproteolytic cleavage occurs by a canonical serine protease mechanism, in which the side chain hydroxyl group of the serine supplies its oxygen atom to form the C-terminus of the beta chain, while the remainder of the serine residue undergoes an oxidative deamination to produce ammonia and the pyruvoyl prosthetic group on the alpha chain. During this reaction, the Ser that is part of the protease active site of the proenzyme becomes the pyruvoyl prosthetic group, which constitutes an essential element of the active site of the mature decarboxylase.

It localises to the cell membrane. It catalyses the reaction a 1,2-diacyl-sn-glycero-3-phospho-L-serine + H(+) = a 1,2-diacyl-sn-glycero-3-phosphoethanolamine + CO2. Its pathway is phospholipid metabolism; phosphatidylethanolamine biosynthesis; phosphatidylethanolamine from CDP-diacylglycerol: step 2/2. In terms of biological role, catalyzes the formation of phosphatidylethanolamine (PtdEtn) from phosphatidylserine (PtdSer). This chain is Phosphatidylserine decarboxylase proenzyme, found in Xanthomonas oryzae pv. oryzae (strain KACC10331 / KXO85).